Consider the following 487-residue polypeptide: GTPase Der (487 aa).

2 consecutive EngA-type G domains span residues 3 to 166 (PVIA…PRDA) and 193 to 366 (IKIA…QSAV). Residues 9-16 (GRPNVGKS), 56-60 (DTGGI), 118-121 (NKID), 199-206 (GRPNVGKS), 246-250 (DTAGV), and 311-314 (NKWD) contribute to the GTP site. Residues 367–451 (TRWPTSRLTQ…PIRIEYKGGE (85 aa)) form the KH-like domain. A compositionally biased stretch (basic and acidic residues) spans 448–461 (KGGENPYEGKKNTL). Residues 448 to 487 (KGGENPYEGKKNTLTDRQVNKKRRLMSHHKKAEKKRRDKR) form a disordered region. Residues 467–487 (NKKRRLMSHHKKAEKKRRDKR) are compositionally biased toward basic residues.

The protein belongs to the TRAFAC class TrmE-Era-EngA-EngB-Septin-like GTPase superfamily. EngA (Der) GTPase family. As to quaternary structure, associates with the 50S ribosomal subunit.

GTPase that plays an essential role in the late steps of ribosome biogenesis. The protein is GTPase Der of Pseudomonas putida (strain ATCC 700007 / DSM 6899 / JCM 31910 / BCRC 17059 / LMG 24140 / F1).